Consider the following 410-residue polypeptide: Proteasomal ubiquitin receptor ADRM1 (410 aa).

The Pru domain occupies 17–130; it reads SSSKYLVEFR…RKVNEYLNNP (114 aa). Position 18 is a phosphoserine (Ser18). Residues 191–257 are compositionally biased toward low complexity; it reads GSGGPATSSS…PAAQTPSLPA (67 aa). Disordered regions lie at residues 191 to 264 and 381 to 410; these read GSGG…SSTQ and FAKA…MSLD. One can recognise a DEUBAD domain in the interval 281–395; it reads PAMPTEGSGV…EGSDSKTDDG (115 aa). The span at 381–401 shows a compositional bias: basic and acidic residues; it reads FAKAMEGSDSKTDDGDSKDKK.

The protein belongs to the ADRM1 family. Component of the 19S proteasome regulatory particle complex. The 26S proteasome consists of a 20S core particle (CP) and two 19S regulatory subunits (RP).

It is found in the cytoplasm. The protein resides in the nucleus. In terms of biological role, component of the 26S proteasome, a multiprotein complex involved in the ATP-dependent degradation of ubiquitinated proteins. This complex plays a key role in the maintenance of protein homeostasis by removing misfolded or damaged proteins, which could impair cellular functions, and by removing proteins whose functions are no longer required. Therefore, the proteasome participates in numerous cellular processes, including cell cycle progression, apoptosis, or DNA damage repair. Within the complex, functions as a proteasomal ubiquitin receptor. This is Proteasomal ubiquitin receptor ADRM1 (adrm1b) from Danio rerio (Zebrafish).